A 387-amino-acid chain; its full sequence is Formate-dependent phosphoribosylglycinamide formyltransferase (387 aa).

N(1)-(5-phospho-beta-D-ribosyl)glycinamide contacts are provided by residues 12 to 13 (EL) and glutamate 72. ATP is bound by residues arginine 104, lysine 145, 150-155 (SSGKGQ), 185-188 (EEFI), and glutamate 193. The ATP-grasp domain maps to 109 to 300 (DLAARELGLA…EFELHLRAVL (192 aa)). Positions 258 and 270 each coordinate Mg(2+). N(1)-(5-phospho-beta-D-ribosyl)glycinamide is bound by residues aspartate 277, lysine 347, and 354-355 (RR).

It belongs to the PurK/PurT family. In terms of assembly, homodimer.

The catalysed reaction is N(1)-(5-phospho-beta-D-ribosyl)glycinamide + formate + ATP = N(2)-formyl-N(1)-(5-phospho-beta-D-ribosyl)glycinamide + ADP + phosphate + H(+). It participates in purine metabolism; IMP biosynthesis via de novo pathway; N(2)-formyl-N(1)-(5-phospho-D-ribosyl)glycinamide from N(1)-(5-phospho-D-ribosyl)glycinamide (formate route): step 1/1. Its function is as follows. Involved in the de novo purine biosynthesis. Catalyzes the transfer of formate to 5-phospho-ribosyl-glycinamide (GAR), producing 5-phospho-ribosyl-N-formylglycinamide (FGAR). Formate is provided by PurU via hydrolysis of 10-formyl-tetrahydrofolate. The protein is Formate-dependent phosphoribosylglycinamide formyltransferase of Anaeromyxobacter dehalogenans (strain 2CP-C).